The primary structure comprises 247 residues: Phycocyanobilin:ferredoxin oxidoreductase (247 aa).

Belongs to the HY2 family.

It catalyses the reaction (2R,3Z)-phycocyanobilin + 4 oxidized [2Fe-2S]-[ferredoxin] = biliverdin IXalpha + 4 reduced [2Fe-2S]-[ferredoxin] + 4 H(+). In terms of biological role, catalyzes the four-electron reduction of biliverdin IX-alpha (2-electron reduction at both the A and D rings); the reaction proceeds via an isolatable 2-electron intermediate, 181,182-dihydrobiliverdin. The protein is Phycocyanobilin:ferredoxin oxidoreductase of Synechococcus sp. (strain CC9605).